Reading from the N-terminus, the 542-residue chain is Calcium-dependent protein kinase 15 (542 aa).

The segment at 1–73 is disordered; sequence MGARASRHRQ…QAPQQAAAED (73 aa). Residue G2 is the site of N-myristoyl glycine attachment. Low complexity predominate over residues 12–21; the sequence is PDQSQSQSPS. The segment covering 22-40 has biased composition (basic residues); it reads PHHKHHHHHQTTRAPKPKP. The span at 41–60 shows a compositional bias: pro residues; that stretch reads KPQPPPPQQPRSQPPPPPRH. Positions 61–71 are enriched in low complexity; that stretch reads QPQQAPQQAAA. Positions 90–348 constitute a Protein kinase domain; sequence YTFGRELGRG…AAEILNHPWI (259 aa). ATP is bound by residues 96-104 and K119; that span reads LGRGQFGVT. The active-site Proton acceptor is the D214. An autoinhibitory domain region spans residues 354–384; the sequence is APDKPLDITVISRMKQFRAMNKLKKVALKVV. 4 consecutive EF-hand domains span residues 391-426, 427-462, 463-497, and 498-533; these read EEIV…LGTK, ISES…MNRL, EKED…KYDM, and GDEA…NSPE. Residues D404, D406, S408, T410, E415, D440, D442, N444, S446, E451, D476, D478, S480, E487, D511, D513, D515, R517, and E522 each coordinate Ca(2+).

This sequence belongs to the protein kinase superfamily. Ser/Thr protein kinase family. CDPK subfamily.

It localises to the membrane. It catalyses the reaction L-seryl-[protein] + ATP = O-phospho-L-seryl-[protein] + ADP + H(+). The enzyme catalyses L-threonyl-[protein] + ATP = O-phospho-L-threonyl-[protein] + ADP + H(+). Activated by calcium. Autophosphorylation may play an important role in the regulation of the kinase activity. May play a role in signal transduction pathways that involve calcium as a second messenger. This is Calcium-dependent protein kinase 15 from Oryza sativa subsp. japonica (Rice).